A 416-amino-acid polypeptide reads, in one-letter code: MFQDVLVITVAAGRGGDGAVSFRREKFVPKGGPDGGDGGRGGSVYLRARGSVDSLSRLSKRTYKAEDGEHGRGSQQHGRGGEDLVIEVPRGTRVFDADTGELLADLTEEGQTVLVARGGAGGRGNMHFVSPTRQAPRFAEAGEEGEKRRLRLELMLIADVGLVGYPNAGKSSLLAAMTRAHPKIAPYPFTTLSPNLGVVEVSEEERFTLADIPGIIEGASEGKGLGLEFLRHIARTRVLLYVLDAADEPLKTLETLRKEVGAYDPALLRRPSLVALNKVDLLEEEAVKALADALAREGLAVLPVSALTGAGLPALKEALHALVRSTPPPEMPKPVPRKEVQAGVEVVPVAEGVYEVRAPEVERYLARIKGDLMEAAGYLQEVFRRQGVEAALRAKGVRAGDLVRIGGLEFEYIPEV.

Positions 1–157 constitute an Obg domain; it reads MFQDVLVITV…RRLRLELMLI (157 aa). Disordered regions lie at residues 25-44 and 62-82; these read EKFVPKGGPDGGDGGRGGSV and TYKAEDGEHGRGSQQHGRGGE. A compositionally biased stretch (gly residues) spans 32–42; that stretch reads GPDGGDGGRGG. Residues 63–72 show a composition bias toward basic and acidic residues; sequence YKAEDGEHGR. The 167-residue stretch at 158–324 folds into the OBG-type G domain; it reads ADVGLVGYPN…LKEALHALVR (167 aa). Residues 164 to 171, 189 to 193, 211 to 214, 277 to 280, and 305 to 307 each bind GTP; these read GYPNAGKS, FTTLS, DIPG, NKVD, and SAL. The Mg(2+) site is built by Ser171 and Thr191. The OCT domain maps to 336 to 414; sequence PRKEVQAGVE…IGGLEFEYIP (79 aa).

The protein belongs to the TRAFAC class OBG-HflX-like GTPase superfamily. OBG GTPase family. In terms of assembly, monomer. The cofactor is Mg(2+).

It localises to the cytoplasm. In terms of biological role, an essential GTPase which binds GTP, GDP and possibly (p)ppGpp with moderate affinity, with high nucleotide exchange rates and a fairly low GTP hydrolysis rate. Plays a role in control of the cell cycle, stress response, ribosome biogenesis and in those bacteria that undergo differentiation, in morphogenesis control. This chain is GTPase Obg, found in Thermus thermophilus (strain ATCC 27634 / DSM 579 / HB8).